A 174-amino-acid chain; its full sequence is ATP synthase subunit b (174 aa).

The chain crosses the membrane as a helical span at residues 15 to 33 (NPGLVIWTLVTFSVVVFVL).

Belongs to the ATPase B chain family. In terms of assembly, F-type ATPases have 2 components, F(1) - the catalytic core - and F(0) - the membrane proton channel. F(1) has five subunits: alpha(3), beta(3), gamma(1), delta(1), epsilon(1). F(0) has three main subunits: a(1), b(2) and c(10-14). The alpha and beta chains form an alternating ring which encloses part of the gamma chain. F(1) is attached to F(0) by a central stalk formed by the gamma and epsilon chains, while a peripheral stalk is formed by the delta and b chains.

The protein localises to the cell inner membrane. Functionally, f(1)F(0) ATP synthase produces ATP from ADP in the presence of a proton or sodium gradient. F-type ATPases consist of two structural domains, F(1) containing the extramembraneous catalytic core and F(0) containing the membrane proton channel, linked together by a central stalk and a peripheral stalk. During catalysis, ATP synthesis in the catalytic domain of F(1) is coupled via a rotary mechanism of the central stalk subunits to proton translocation. In terms of biological role, component of the F(0) channel, it forms part of the peripheral stalk, linking F(1) to F(0). The polypeptide is ATP synthase subunit b (Leptospira biflexa serovar Patoc (strain Patoc 1 / Ames)).